Here is a 293-residue protein sequence, read N- to C-terminus: Oxidoreductase clz16 (293 aa).

The protein belongs to the asaB hydroxylase/desaturase family.

It participates in secondary metabolite biosynthesis. Oxidoreductase; part of the gene cluster that mediates the biosynthesis of squalestatin S1 (SQS1, also known as zaragozic acid A), a heavily oxidized fungal polyketide that offers potent cholesterol lowering activity by targeting squalene synthase (SS). SQS1 is composed of a 2,8-dioxobicyclic[3.2.1]octane-3,4,5-tricarboxyclic acid core that is connected to two lipophilic polyketide arms. These initial steps feature the priming of an unusual benzoic acid starter unit onto the highly reducing polyketide synthase clz14, followed by oxaloacetate extension and product release to generate a tricarboxylic acid containing product. The phenylalanine ammonia lyase (PAL) clz10 and the acyl-CoA ligase clz12 are involved in transforming phenylalanine into benzoyl-CoA. The citrate synthase-like protein clz17 is involved in connecting the C-alpha-carbons of the hexaketide chain and oxaloacetate to afford the tricarboxylic acid unit. The potential hydrolytic enzymes, clz11 and clz13, are in close proximity to pks2 and may participate in product release. On the other side, the tetraketide arm is synthesized by a the squalestatin tetraketide synthase clz2 and enzymatically esterified to the core in the last biosynthetic step, by the acetyltransferase clz6. The biosynthesis of the tetraketide must involve 3 rounds of chain extension. After the first and second rounds methyl-transfer occurs, and in all rounds of extension the ketoreductase and dehydratase are active. The enoyl reductase and C-MeT of clz2 are not active in the final round of extension. The acetyltransferase clz6 appears to have a broad substrate selectivity for its acyl CoA substrate, allowing the in vitro synthesis of novel squalestatins. The biosynthesis of SQS1 requires several oxidative steps likely performed by oxidoreductases clz3, clz15 and clz16. Finally, in support of the identification of the cluster as being responsible for SQS1 production, the cluster contains a gene encoding a putative squalene synthase (SS) clz20, suggesting a likely mechanism for self-resistance. This Cochliobolus lunatus (Filamentous fungus) protein is Oxidoreductase clz16.